The primary structure comprises 566 residues: DDB1- and CUL4-associated factor 10 (566 aa).

Disordered stretches follow at residues 1-72 (MFPF…AERA) and 87-123 (TASA…GAGL). 6 positions are modified to phosphoserine: serine 50, serine 57, serine 67, serine 96, serine 99, and serine 100. Residues 87–100 (TASASQAKLSPSSS) are compositionally biased toward low complexity. Arginine 141 bears the Omega-N-methylarginine mark. 4 WD repeats span residues 173–212 (RTHG…HIKT), 216–254 (AHED…TKVC), 258–297 (GHTS…EDGC), and 303–342 (FHTR…KSLE). A compositionally biased stretch (low complexity) spans 354–374 (TTSSSDLTTTSSSSGSRVSGS). Residues 354 to 413 (TTSSSDLTTTSSSSGSRVSGSPCHHNDSNSTEKHMSRASQREGVSPRNSLEVLTPEVPGE) form a disordered region. Serine 356 is subject to Phosphoserine. The segment covering 377–388 (HHNDSNSTEKHM) has biased composition (basic and acidic residues). WD repeat units lie at residues 415–455 (DRGN…QEGA), 477–515 (VGRG…SELV), and 533–566 (SHND…QPKF).

It belongs to the WD repeat DCAF10 family. In terms of assembly, interacts with DDB1.

It functions in the pathway protein modification; protein ubiquitination. May function as a substrate receptor for CUL4-DDB1 E3 ubiquitin-protein ligase complex. The protein is DDB1- and CUL4-associated factor 10 (Dcaf10) of Mus musculus (Mouse).